The sequence spans 55 residues: Small ribosomal subunit protein bS21 (55 aa).

It belongs to the bacterial ribosomal protein bS21 family.

This is Small ribosomal subunit protein bS21 from Phytoplasma mali (strain AT).